Here is a 350-residue protein sequence, read N- to C-terminus: Twinfilin-1 (350 aa).

At serine 2 the chain carries N-acetylserine. An ADF-H 1 domain is found at 2–139; the sequence is SHQTGIQASE…SLHGYKKYLL (138 aa). Serine 143 and serine 277 each carry phosphoserine. The ADF-H 2 domain maps to 177 to 313; that stretch reads GVAFPISQEA…TADFLYEEVH (137 aa). The residue at position 309 (tyrosine 309) is a Phosphotyrosine. The interval 316 to 350 is disordered; sequence QHAHKQSFAKPKGPSGKRGIRRIIRGPAETEATTE. The residue at position 349 (threonine 349) is a Phosphothreonine.

The protein belongs to the actin-binding proteins ADF family. Twinfilin subfamily. Interacts with G-actin; ADP-actin form and capping protein (CP). May also be able to interact with TWF2 and phosphoinositides, PI(4,5)P2. When bound to PI(4,5)P2, it is down-regulated. Interacts with ACTG1. Post-translationally, phosphorylated on serine and threonine residues.

The protein localises to the cytoplasm. It localises to the cytoskeleton. Its function is as follows. Actin-binding protein involved in motile and morphological processes. Inhibits actin polymerization, likely by sequestering G-actin. By capping the barbed ends of filaments, it also regulates motility. Seems to play an important role in clathrin-mediated endocytosis and distribution of endocytic organelles. The polypeptide is Twinfilin-1 (TWF1) (Bos taurus (Bovine)).